Reading from the N-terminus, the 337-residue chain is Probable poly [ADP-ribose] polymerase DDB_G0278045 (337 aa).

One can recognise a PARP catalytic domain in the interval 21 to 231; that stretch reads KKWDIIYKQR…NNNKNKNKNN (211 aa). Positions 218–242 are enriched in low complexity; sequence NNTNNNNKNKNKNNNKNNNKNIKIQ. The interval 218 to 247 is disordered; that stretch reads NNTNNNNKNKNKNNNKNNNKNIKIQNENKN.

The enzyme catalyses L-aspartyl-[protein] + NAD(+) = 4-O-(ADP-D-ribosyl)-L-aspartyl-[protein] + nicotinamide. It catalyses the reaction L-glutamyl-[protein] + NAD(+) = 5-O-(ADP-D-ribosyl)-L-glutamyl-[protein] + nicotinamide. The catalysed reaction is NAD(+) + (ADP-D-ribosyl)n-acceptor = nicotinamide + (ADP-D-ribosyl)n+1-acceptor + H(+).. This is Probable poly [ADP-ribose] polymerase DDB_G0278045 from Dictyostelium discoideum (Social amoeba).